We begin with the raw amino-acid sequence, 584 residues long: N(6)-adenosine-methyltransferase subunit METTL3 (584 aa).

2 disordered regions span residues 1–65 and 162–221; these read MSDT…EHPP and KADD…SNKV. Over residues 187–204 the composition is skewed to polar residues; the sequence is RKSSVSLATASISQLTAS. Positions 213–220 match the Nuclear localization signal motif; the sequence is DKKGRSNK. Residues 381–382 and D399 each bind S-adenosyl-L-methionine; that span reads DI. Positions 400–414 are gate loop 1; that stretch reads PPWDIHMELPYGTLT. Interaction with METTL14 stretches follow at residues 454–458 and 468–484; these read DRVDE and QRII…NHGK. The tract at residues 466-483 is interphase loop; the sequence is QLQRIIRTGRTGHWLNHG. The interval 469–482 is positively charged region required for RNA-binding; it reads RIIRTGRTGHWLNH. Positions 511–519 are gate loop 2; sequence VRSTSHKPD. S-adenosyl-L-methionine is bound by residues K517, 540–543, and 553–554; these read RPHN and NQ.

It belongs to the MT-A70-like family. In terms of assembly, heterodimer; heterodimerizes with mettl14 to form an antiparallel heterodimer that constitutes an active methyltransferase. Component of the WMM complex, a N6-methyltransferase complex composed of a catalytic subcomplex, named MAC, and of an associated subcomplex, named MACOM. The MAC subcomplex is composed of mettl3 and mettl14. As to expression, expressed in the hemato-vascular system: enriched in sorted endothelial cells and haemogenic endothelium.

Its subcellular location is the nucleus. The protein resides in the nucleus speckle. It is found in the cytoplasm. It carries out the reaction an adenosine in mRNA + S-adenosyl-L-methionine = an N(6)-methyladenosine in mRNA + S-adenosyl-L-homocysteine + H(+). Functionally, the METTL3-METTL14 heterodimer forms a N6-methyltransferase complex that methylates adenosine residues at the N(6) position of some RNAs and regulates various processes such as the circadian clock, differentiation of embryonic and hematopoietic stem cells, cortical neurogenesis, response to DNA damage, differentiation of T-cells and primary miRNA processing. In the heterodimer formed with mettl14, mettl3 constitutes the catalytic core. N6-methyladenosine (m6A), which takes place at the 5'-[AG]GAC-3' consensus sites of some mRNAs, plays a role in mRNA stability, processing and translation efficiency. M6A is also involved in hematopoietic stem cells specification: m6A methylation and subsequent destabilization of mRNAs, such as notch1a, leads to decreased Notch signaling, promoting endothelial to hematopoietic transition. M6A also takes place in other RNA molecules, such as primary miRNA (pri-miRNAs). Mediates methylation of pri-miRNAs. This is N(6)-adenosine-methyltransferase subunit METTL3 from Danio rerio (Zebrafish).